We begin with the raw amino-acid sequence, 227 residues long: Cytochrome c oxidase subunit 2 (227 aa).

The Mitochondrial intermembrane portion of the chain corresponds to 1–14 (MAHAAQVGLQDATS). Residues 15–45 (PIMEELITFHDHALMIIFLICFLVLYALFLT) traverse the membrane as a helical segment. The Mitochondrial matrix portion of the chain corresponds to 46 to 59 (LTTKLTSTNISDAQ). A helical transmembrane segment spans residues 60–87 (EMETIWTILPAIILVLIALPSLRILYMT). Topologically, residues 88-227 (DEINDPSFTI…IFEMGPVFAL (140 aa)) are mitochondrial intermembrane. The Cu cation site is built by His-161, Cys-196, Glu-198, Cys-200, His-204, and Met-207. Glu-198 contacts Mg(2+).

Belongs to the cytochrome c oxidase subunit 2 family. In terms of assembly, component of the cytochrome c oxidase (complex IV, CIV), a multisubunit enzyme composed of 14 subunits. The complex is composed of a catalytic core of 3 subunits MT-CO1, MT-CO2 and MT-CO3, encoded in the mitochondrial DNA, and 11 supernumerary subunits COX4I, COX5A, COX5B, COX6A, COX6B, COX6C, COX7A, COX7B, COX7C, COX8 and NDUFA4, which are encoded in the nuclear genome. The complex exists as a monomer or a dimer and forms supercomplexes (SCs) in the inner mitochondrial membrane with NADH-ubiquinone oxidoreductase (complex I, CI) and ubiquinol-cytochrome c oxidoreductase (cytochrome b-c1 complex, complex III, CIII), resulting in different assemblies (supercomplex SCI(1)III(2)IV(1) and megacomplex MCI(2)III(2)IV(2)). Found in a complex with TMEM177, COA6, COX18, COX20, SCO1 and SCO2. Interacts with TMEM177 in a COX20-dependent manner. Interacts with COX20. Interacts with COX16. Cu cation is required as a cofactor.

The protein resides in the mitochondrion inner membrane. The catalysed reaction is 4 Fe(II)-[cytochrome c] + O2 + 8 H(+)(in) = 4 Fe(III)-[cytochrome c] + 2 H2O + 4 H(+)(out). Functionally, component of the cytochrome c oxidase, the last enzyme in the mitochondrial electron transport chain which drives oxidative phosphorylation. The respiratory chain contains 3 multisubunit complexes succinate dehydrogenase (complex II, CII), ubiquinol-cytochrome c oxidoreductase (cytochrome b-c1 complex, complex III, CIII) and cytochrome c oxidase (complex IV, CIV), that cooperate to transfer electrons derived from NADH and succinate to molecular oxygen, creating an electrochemical gradient over the inner membrane that drives transmembrane transport and the ATP synthase. Cytochrome c oxidase is the component of the respiratory chain that catalyzes the reduction of oxygen to water. Electrons originating from reduced cytochrome c in the intermembrane space (IMS) are transferred via the dinuclear copper A center (CU(A)) of subunit 2 and heme A of subunit 1 to the active site in subunit 1, a binuclear center (BNC) formed by heme A3 and copper B (CU(B)). The BNC reduces molecular oxygen to 2 water molecules using 4 electrons from cytochrome c in the IMS and 4 protons from the mitochondrial matrix. In Gorilla gorilla gorilla (Western lowland gorilla), this protein is Cytochrome c oxidase subunit 2 (MT-CO2).